A 136-amino-acid chain; its full sequence is Large ribosomal subunit protein uL16 (136 aa).

This sequence belongs to the universal ribosomal protein uL16 family. As to quaternary structure, part of the 50S ribosomal subunit.

Functionally, binds 23S rRNA and is also seen to make contacts with the A and possibly P site tRNAs. The sequence is that of Large ribosomal subunit protein uL16 from Salmonella agona (strain SL483).